Here is a 204-residue protein sequence, read N- to C-terminus: Casparian strip membrane protein 2 (204 aa).

Residues 1–42 are Cytoplasmic-facing; it reads MKNESTFIDVPAESSSAMKGKAPLIGVARDHTTSGSGGYNRG. The helical transmembrane segment at 43 to 63 threads the bilayer; the sequence is LAIFDFLLRLAAIVAALAAAA. Over 64-92 the chain is Extracellular; the sequence is TMGTSDETLPFFTQFLQFEASYDDLPTFQ. A helical transmembrane segment spans residues 93–113; sequence FFVIAMALVGGYLVLSLPISV. The Cytoplasmic segment spans residues 114–125; it reads VTILRPLATAPR. The chain crosses the membrane as a helical span at residues 126–146; sequence LLLLVLDTGVLALNTAAASSA. Residues 147–178 lie on the Extracellular side of the membrane; that stretch reads AAISYLAHSGNQNTNWLPICQQFGDFCQKSSG. A helical membrane pass occupies residues 179–199; the sequence is AVVSAFVSVVFFTILVVISGV. Residues 200–204 lie on the Cytoplasmic side of the membrane; it reads ALKRH.

Belongs to the Casparian strip membrane proteins (CASP) family. As to quaternary structure, homodimer and heterodimers with other CASP proteins. Interacts with CASP1, CASP3 and CASP4.

It is found in the cell membrane. Regulates membrane-cell wall junctions and localized cell wall deposition. Required for establishment of the Casparian strip membrane domain (CSD) and the subsequent formation of Casparian strips, a cell wall modification of the root endodermis that determines an apoplastic barrier between the intraorganismal apoplasm and the extraorganismal apoplasm and prevents lateral diffusion. This Arabidopsis thaliana (Mouse-ear cress) protein is Casparian strip membrane protein 2 (CASP2).